Here is a 357-residue protein sequence, read N- to C-terminus: Pre-mRNA-splicing factor RBM22 homolog (357 aa).

The segment at 153–180 (RNMARVCSFWRKNSCNRGDECPYLHKEI) adopts a C3H1-type zinc-finger fold. Residues 222-295 (NKICIQGISE…CNLTVHLQDN (74 aa)) form the RRM domain.

This sequence belongs to the SLT11 family. In terms of assembly, probable component of the spliceosome C complex.

It is found in the nucleus. Functionally, involved in pre-mRNA splicing. Binds RNA. This is Pre-mRNA-splicing factor RBM22 homolog from Plasmodium falciparum (isolate 3D7).